The sequence spans 226 residues: 2-amino-5-formylamino-6-ribosylaminopyrimidin-4(3H)-one 5'-monophosphate deformylase (226 aa).

Fe cation contacts are provided by Glu-29, His-31, Asp-40, and His-108.

It belongs to the creatininase superfamily. FAPy deformylase family. In terms of assembly, homodimer. Fe(2+) serves as cofactor. Requires Zn(2+) as cofactor.

It catalyses the reaction 2-amino-5-formylamino-6-(5-phospho-D-ribosylamino)pyrimidin-4(3H)-one + H2O = 2,5-diamino-6-(1-D-ribosylamino)pyrimidin-4(3H)-one 5'-phosphate + formate + H(+). It participates in cofactor biosynthesis; coenzyme F420 biosynthesis. Its pathway is cofactor biosynthesis; riboflavin biosynthesis. Its function is as follows. Catalyzes the hydrolysis of the formamide of 2-amino-5-formylamino-6-ribosylamino-4(3H)-pyrimidinone 5'-monophosphate (FAPy) to form 2,5-diamino-6-ribosylamino-4(3H)-pyrimidinone 5'-phosphate (APy). This is 2-amino-5-formylamino-6-ribosylaminopyrimidin-4(3H)-one 5'-monophosphate deformylase from Methanocaldococcus vulcanius (strain ATCC 700851 / DSM 12094 / M7) (Methanococcus vulcanius).